The chain runs to 338 residues: Flap endonuclease 1 (338 aa).

Residues 1–98 (MGTDIGDLLQ…ETLNRRKEVR (98 aa)) form an N-domain region. The Mg(2+) site is built by D27, D80, E152, E154, D173, D175, and D236. The tract at residues 116–257 (AAYKYAQASS…TALKLIKKHG (142 aa)) is I-domain. The interaction with PCNA stretch occupies residues 330–338 (RQQTLDQWF).

It belongs to the XPG/RAD2 endonuclease family. FEN1 subfamily. Interacts with PCNA. PCNA stimulates the nuclease activity without altering cleavage specificity. Requires Mg(2+) as cofactor.

In terms of biological role, structure-specific nuclease with 5'-flap endonuclease and 5'-3' exonuclease activities involved in DNA replication and repair. During DNA replication, cleaves the 5'-overhanging flap structure that is generated by displacement synthesis when DNA polymerase encounters the 5'-end of a downstream Okazaki fragment. Binds the unpaired 3'-DNA end and kinks the DNA to facilitate 5' cleavage specificity. Cleaves one nucleotide into the double-stranded DNA from the junction in flap DNA, leaving a nick for ligation. Also involved in the base excision repair (BER) pathway. Acts as a genome stabilization factor that prevents flaps from equilibrating into structures that lead to duplications and deletions. Also possesses 5'-3' exonuclease activity on nicked or gapped double-stranded DNA. This chain is Flap endonuclease 1, found in Methanosarcina barkeri (strain Fusaro / DSM 804).